Consider the following 647-residue polypeptide: Microtubule-associated protein 9 (647 aa).

Ser-2 is modified (N-acetylserine). The residue at position 12 (Tyr-12) is a Phosphotyrosine. Disordered regions lie at residues Lys-127–Met-323, Ser-344–Ala-421, Lys-491–Gln-514, Lys-530–Lys-553, Asn-580–Ile-600, and Gln-613–Phe-647. Basic and acidic residues predominate over residues Gln-133–Lys-145. The segment covering Ile-155–Leu-166 has biased composition (polar residues). Positions Pro-174–Ser-186 are enriched in basic residues. Residues Lys-184–Ala-210 are a coiled coil. The span at His-187–Ala-200 shows a compositional bias: basic and acidic residues. 2 stretches are compositionally biased toward polar residues: residues Ala-210 to Gly-219 and Cys-239 to Lys-249. Residues Asp-268 to Glu-287 are compositionally biased toward basic and acidic residues. Residues Ala-298–Thr-328 are a coiled coil. Residues Asn-365–Arg-374 show a composition bias toward low complexity. Residues Met-443–Glu-628 adopt a coiled-coil conformation.

Binds to purified microtubules via its C-terminus.

The protein resides in the cytoplasm. Its subcellular location is the cytoskeleton. It localises to the spindle. In terms of biological role, involved in organization of the bipolar mitotic spindle. Required for bipolar spindle assembly, mitosis progression and cytokinesis. May act by stabilizing interphase microtubules. The sequence is that of Microtubule-associated protein 9 (MAP9) from Homo sapiens (Human).